A 145-amino-acid chain; its full sequence is UPF0179 protein Msm_0285 (145 aa).

It belongs to the UPF0179 family.

This Methanobrevibacter smithii (strain ATCC 35061 / DSM 861 / OCM 144 / PS) protein is UPF0179 protein Msm_0285.